Here is a 332-residue protein sequence, read N- to C-terminus: MVKVVKVYYDDEVSMDILKDKTVAVIGYGNQGEAQAKNMRDSGVHVILGLRPSGSSWKRAEKDGFEVYTIEEAVKRADIVHILIPDLVQPKVYREHIEPYLREGQALGFSHGFNIHYKQIVPPEYVDVIMVAPKSPGKRVREKYLEGFGVPALVAVYQDYTGNAKDLALAMAKAIGCTRAGVIETTFKDETESDLIGEQLVLVGGLIELIKKGFEVLVELGYPPELAYFEACNEAKLIMDLIYERGFTGMLKAVSDTAKYGGLTVGPKVIDDHVKENMKKFAERVRSGEFAKEWISKADKASEVLEELMKPIEEHEIEKVGRFIRKMSGLER.

One can recognise a KARI N-terminal Rossmann domain in the interval 5-185 (VKVYYDDEVS…GCTRAGVIET (181 aa)). NADP(+) contacts are provided by residues 28-31 (YGNQ), arginine 51, serine 56, and 86-89 (DLVQ). Histidine 111 is an active-site residue. NADP(+) is bound at residue glycine 137. The region spanning 186–331 (TFKDETESDL…RFIRKMSGLE (146 aa)) is the KARI C-terminal knotted domain. Residues aspartate 194, glutamate 198, glutamate 230, and glutamate 234 each coordinate Mg(2+). Serine 255 provides a ligand contact to substrate.

Belongs to the ketol-acid reductoisomerase family. The cofactor is Mg(2+).

It carries out the reaction (2R)-2,3-dihydroxy-3-methylbutanoate + NADP(+) = (2S)-2-acetolactate + NADPH + H(+). The enzyme catalyses (2R,3R)-2,3-dihydroxy-3-methylpentanoate + NADP(+) = (S)-2-ethyl-2-hydroxy-3-oxobutanoate + NADPH + H(+). It participates in amino-acid biosynthesis; L-isoleucine biosynthesis; L-isoleucine from 2-oxobutanoate: step 2/4. The protein operates within amino-acid biosynthesis; L-valine biosynthesis; L-valine from pyruvate: step 2/4. Involved in the biosynthesis of branched-chain amino acids (BCAA). Catalyzes an alkyl-migration followed by a ketol-acid reduction of (S)-2-acetolactate (S2AL) to yield (R)-2,3-dihydroxy-isovalerate. In the isomerase reaction, S2AL is rearranged via a Mg-dependent methyl migration to produce 3-hydroxy-3-methyl-2-ketobutyrate (HMKB). In the reductase reaction, this 2-ketoacid undergoes a metal-dependent reduction by NADPH to yield (R)-2,3-dihydroxy-isovalerate. The sequence is that of Ketol-acid reductoisomerase (NADP(+)) from Pyrococcus abyssi (strain GE5 / Orsay).